Consider the following 279-residue polypeptide: Phosphatidylglycerol--prolipoprotein diacylglyceryl transferase (279 aa).

3 helical membrane-spanning segments follow: residues 18–38, 55–75, and 89–109; these read LSVR…YFVA, IIFY…VIFQ, and IWHG…AGVI. An a 1,2-diacyl-sn-glycero-3-phospho-(1'-sn-glycerol)-binding site is contributed by arginine 137. Transmembrane regions (helical) follow at residues 203–223 and 235–255; these read LGET…FIEG and IRVA…LIVY.

Belongs to the Lgt family.

It localises to the cell membrane. It carries out the reaction L-cysteinyl-[prolipoprotein] + a 1,2-diacyl-sn-glycero-3-phospho-(1'-sn-glycerol) = an S-1,2-diacyl-sn-glyceryl-L-cysteinyl-[prolipoprotein] + sn-glycerol 1-phosphate + H(+). The protein operates within protein modification; lipoprotein biosynthesis (diacylglyceryl transfer). Functionally, catalyzes the transfer of the diacylglyceryl group from phosphatidylglycerol to the sulfhydryl group of the N-terminal cysteine of a prolipoprotein, the first step in the formation of mature lipoproteins. The protein is Phosphatidylglycerol--prolipoprotein diacylglyceryl transferase of Staphylococcus aureus (strain Mu3 / ATCC 700698).